The following is a 239-amino-acid chain: Phosphoribosylaminoimidazole-succinocarboxamide synthase (239 aa).

This sequence belongs to the SAICAR synthetase family.

It catalyses the reaction 5-amino-1-(5-phospho-D-ribosyl)imidazole-4-carboxylate + L-aspartate + ATP = (2S)-2-[5-amino-1-(5-phospho-beta-D-ribosyl)imidazole-4-carboxamido]succinate + ADP + phosphate + 2 H(+). It functions in the pathway purine metabolism; IMP biosynthesis via de novo pathway; 5-amino-1-(5-phospho-D-ribosyl)imidazole-4-carboxamide from 5-amino-1-(5-phospho-D-ribosyl)imidazole-4-carboxylate: step 1/2. This is Phosphoribosylaminoimidazole-succinocarboxamide synthase from Chlorobium luteolum (strain DSM 273 / BCRC 81028 / 2530) (Pelodictyon luteolum).